We begin with the raw amino-acid sequence, 75 residues long: Large ribosomal subunit protein bL31 (75 aa).

Belongs to the bacterial ribosomal protein bL31 family. Type A subfamily. In terms of assembly, part of the 50S ribosomal subunit.

In terms of biological role, binds the 23S rRNA. In Gluconobacter oxydans (strain 621H) (Gluconobacter suboxydans), this protein is Large ribosomal subunit protein bL31.